Reading from the N-terminus, the 156-residue chain is Ribosome maturation factor RimP (156 aa).

The protein belongs to the RimP family.

The protein localises to the cytoplasm. Functionally, required for maturation of 30S ribosomal subunits. The chain is Ribosome maturation factor RimP from Bacillus thuringiensis (strain Al Hakam).